The primary structure comprises 246 residues: Transmembrane protein 41 homolog (246 aa).

Transmembrane regions (helical) follow at residues 12–32 (WLVL…YSNF), 68–88 (SVVL…AIPG), 101–123 (PFYV…CYTI), 159–179 (IFLR…SPVL), 182–202 (PLAP…FLYI), and 219–239 (SWSS…PILL).

This sequence belongs to the TMEM41 family.

The protein localises to the membrane. This Caenorhabditis elegans protein is Transmembrane protein 41 homolog (tag-175).